The following is a 157-amino-acid chain: Class-10 pathogenesis-related protein 1 (157 aa).

The protein belongs to the BetVI family. Expressed in roots. Detected in nodules and leaves, but not in stems and flowers.

This is Class-10 pathogenesis-related protein 1 (PR10-1) from Medicago truncatula (Barrel medic).